The following is a 264-amino-acid chain: MSNILTEICATKARHVADKKKHISETDLYNLTKNQTAPRGFRAALDKKRAEGKFSLIAEIKKASPSKGLIRPDFEPILHARSYQEGGAACLSVLTDQPYFQGHEDYLIAARNEVTLPVLRKDFMIDPWQVTEARAIGADAILIIVAALEDNQMQEIEAAALEYGMDALIEVHSTQEMERALRLKSRLIGVNNRDLRDFSVSFDRTYELIKQAPKECTFVAESGIQTHDDLVAMNQHNIGCFLVGETLMRQKDVKQATRDLLGLN.

This sequence belongs to the TrpC family.

It catalyses the reaction 1-(2-carboxyphenylamino)-1-deoxy-D-ribulose 5-phosphate + H(+) = (1S,2R)-1-C-(indol-3-yl)glycerol 3-phosphate + CO2 + H2O. It participates in amino-acid biosynthesis; L-tryptophan biosynthesis; L-tryptophan from chorismate: step 4/5. The polypeptide is Indole-3-glycerol phosphate synthase (trpC) (Zymomonas mobilis subsp. pomaceae (strain ATCC 29192 / DSM 22645 / JCM 10191 / CCUG 17912 / NBRC 13757 / NCIMB 11200 / NRRL B-4491 / Barker I)).